We begin with the raw amino-acid sequence, 244 residues long: 7-cyano-7-deazaguanine synthase (244 aa).

Residue 14–24 (FSGGQDSATCV) participates in ATP binding. Positions 202, 217, 220, and 223 each coordinate Zn(2+).

The protein belongs to the QueC family. Zn(2+) serves as cofactor.

The enzyme catalyses 7-carboxy-7-deazaguanine + NH4(+) + ATP = 7-cyano-7-deazaguanine + ADP + phosphate + H2O + H(+). It functions in the pathway purine metabolism; 7-cyano-7-deazaguanine biosynthesis. Its function is as follows. Catalyzes the ATP-dependent conversion of 7-carboxy-7-deazaguanine (CDG) to 7-cyano-7-deazaguanine (preQ(0)). This Burkholderia mallei (strain NCTC 10229) protein is 7-cyano-7-deazaguanine synthase.